Consider the following 189-residue polypeptide: Threonylcarbamoyl-AMP synthase (189 aa).

Positions 7–189 (NFTVKGLTEQ…DAITGKIIRK (183 aa)) constitute a YrdC-like domain.

The protein belongs to the SUA5 family. TsaC subfamily.

It is found in the cytoplasm. The catalysed reaction is L-threonine + hydrogencarbonate + ATP = L-threonylcarbamoyladenylate + diphosphate + H2O. Required for the formation of a threonylcarbamoyl group on adenosine at position 37 (t(6)A37) in tRNAs that read codons beginning with adenine. Catalyzes the conversion of L-threonine, HCO(3)(-)/CO(2) and ATP to give threonylcarbamoyl-AMP (TC-AMP) as the acyladenylate intermediate, with the release of diphosphate. The polypeptide is Threonylcarbamoyl-AMP synthase (Blochmanniella floridana).